Here is a 347-residue protein sequence, read N- to C-terminus: NADH-ubiquinone oxidoreductase chain 2 (347 aa).

11 consecutive transmembrane segments (helical) span residues 3 to 23, 25 to 45, 67 to 87, 96 to 116, 122 to 142, 145 to 165, 178 to 198, 200 to 220, 237 to 257, 274 to 294, and 325 to 345; these read PIILIIILMTVMLGTIIVMIS, HWLLIWIGFEMNMLAIIPIMM, SMLLMMAIIINLMFSGQWTVM, MLMTMALAMKLGMAPFHFWVP, IPLSSGLILLTWQKLAPMSVL, ILPSINLDLILTLSILSITIG, IMAYSSIAHMGWMTAVLLYNP, MTLLNLIIYIIMTSTMFTLFM, APIMTILVLITLLSMGGLPPL, DSIILPTLMAITALLNLYFYM, and LLPTMTVLSTMLLPLTPILSI.

The protein belongs to the complex I subunit 2 family. In terms of assembly, core subunit of respiratory chain NADH dehydrogenase (Complex I) which is composed of 45 different subunits. Interacts with TMEM242.

It localises to the mitochondrion inner membrane. It catalyses the reaction a ubiquinone + NADH + 5 H(+)(in) = a ubiquinol + NAD(+) + 4 H(+)(out). In terms of biological role, core subunit of the mitochondrial membrane respiratory chain NADH dehydrogenase (Complex I) which catalyzes electron transfer from NADH through the respiratory chain, using ubiquinone as an electron acceptor. Essential for the catalytic activity and assembly of complex I. The sequence is that of NADH-ubiquinone oxidoreductase chain 2 from Ovis aries (Sheep).